We begin with the raw amino-acid sequence, 436 residues long: O-phosphoseryl-tRNA(Sec) selenium transferase (436 aa).

Positions 1–44 are tetramerization; the sequence is MLDFNIEGLIPKNMEKRGELVLNEYLKEIEDVFNHRKIPENGID. Position 72 (Arg72) interacts with pyridoxal 5'-phosphate. The tract at residues 93–103 is phosphate loop (P-loop); the sequence is GRSGNLVDPQP. Positions 94, 95, and 102 each coordinate substrate. Lys278 bears the N6-(pyridoxal phosphate)lysine mark. Arg307 is a binding site for substrate.

The protein belongs to the SepSecS family. As to quaternary structure, homotetramer. Pyridoxal 5'-phosphate serves as cofactor.

It catalyses the reaction O-phospho-L-seryl-tRNA(Sec) + selenophosphate + H2O = L-selenocysteinyl-tRNA(Sec) + 2 phosphate. The protein operates within aminoacyl-tRNA biosynthesis; selenocysteinyl-tRNA(Sec) biosynthesis; selenocysteinyl-tRNA(Sec) from L-seryl-tRNA(Sec) (archaeal/eukaryal route): step 2/2. In terms of biological role, converts O-phosphoseryl-tRNA(Sec) to selenocysteinyl-tRNA(Sec) required for selenoprotein biosynthesis. This Methanococcus maripaludis (strain DSM 14266 / JCM 13030 / NBRC 101832 / S2 / LL) protein is O-phosphoseryl-tRNA(Sec) selenium transferase (spcS).